The following is a 197-amino-acid chain: MSSKSSSTIRDKWKLKKWYVITAPKVFGEALLGSTPAYDINKALSRKIEVTLYDLTGDYNLVYIHLYFKILGNISGDKLSTIFYGHELSRDYIRSLVRRKSSKINAVVDVTTKDGYMLRVKGLVLTTYRAHISQKTAIRKVISDITRKKAEESDFDQFVQDVIFGKLSNDIFQEAKKIYPLRKVEIEKTKLLKAPKV.

It belongs to the eukaryotic ribosomal protein eS1 family.

The polypeptide is Small ribosomal subunit protein eS1 (Sulfolobus acidocaldarius (strain ATCC 33909 / DSM 639 / JCM 8929 / NBRC 15157 / NCIMB 11770)).